A 181-amino-acid chain; its full sequence is Cytidylate kinase (181 aa).

7–15 provides a ligand contact to ATP; that stretch reads GPPGSGTTS.

Belongs to the cytidylate kinase family. Type 2 subfamily.

It localises to the cytoplasm. It carries out the reaction CMP + ATP = CDP + ADP. The catalysed reaction is dCMP + ATP = dCDP + ADP. This Methanoculleus marisnigri (strain ATCC 35101 / DSM 1498 / JR1) protein is Cytidylate kinase.